A 208-amino-acid chain; its full sequence is MASLCLSLHQTLTNPLSAPRCRPLSLSFPGSSTFSIRPSSRRATALTTRASYTPTPATERVISIASYALPFFNSLQYGRFLFAQYPRLGLLFEPIFPILNLYRSVPYASFVAFFGLYLGVVRNTSFSRYVRFNAMQAVTLDVLLAVPVLLTRILDPGQGGGFGMKAMMWGHTGVFVFSFMCFVYGVVSSLLGKTPYIPFVADAAGRQL.

Residues 1–49 (MASLCLSLHQTLTNPLSAPRCRPLSLSFPGSSTFSIRPSSRRATALTTR) constitute a chloroplast transit peptide. 4 consecutive transmembrane segments (helical) span residues 61–83 (VISI…FLFA), 101–121 (LYRS…LGVV), 134–154 (AMQA…TRIL), and 172–192 (TGVF…SLLG).

It belongs to the Tic20 family. Part of the Tic complex. Expressed in leaves, siliques and roots.

It localises to the plastid. Its subcellular location is the chloroplast inner membrane. In terms of biological role, may be involved in protein precursor import into chloroplasts. Not redundant with TIC20-I, TIC20-IV or TIC20-V. The polypeptide is Protein TIC 20-II, chloroplastic (TIC20-II) (Arabidopsis thaliana (Mouse-ear cress)).